Here is a 947-residue protein sequence, read N- to C-terminus: MTPLSSPLSQYWQTVVERLPEGFTETSLSAQAKSVLTFSDFALDSVIAHPEWLAELESASPQADEWRHYAGWLQEALAGVCDDASLMRELRLFRRRIMVRIAWAQTLSLVDDETILQQLSHLAETLIVGARDWLYAACCREWGTPCNPQGVPQPLLILGMGKLGGGELNFSSDIDLIFAWPEHGETRGGRRELDNAQFFTRLGQRLIKALDQPTMDGFVYRVDMRLRPFGDSGPLVLSFAALEDYYQEQGRDWERYAMVKARLMGDNDDAWSRELRAMLRPFVFRRYIDFSVIQSLRNMKGMIAREVRRRGLKDNIKLGAGGIREIEFIVQVFQLIRGGREPSLQSRSLLPTLDAIAALHLLPENDVAQLRVAYLFLRRLENLLQSINDEQTQTLPADDLNRARLAWGMKAENWPQLVGELTDHMANVRRVFNELIGDDEADTPQEEERSEPWREVWQDALQEDDSTPVLAHLADEDRRQVLTLIADFRKELDKRPIGPRGRQVLDQLMPHLLADVCSREDAAVTLSRITPLLAGIVTRTTYLELLSEFPGALKHLIMLCAASPMIASQLARYPLLLDELLDPGTLYQPTATDAYRDELRQYLLRVPEEDEEQQLEALRQFKQAQLLRIAAADIAGTLPVMKVSDHLTWLAEAMIDAVVQQAWTQMVARYGQPAHLDERQGRGFAVVGYGKLGGWELGYSSDLDLIFLHDCPMDVMTNGEREIDGRQFYLRLAQRIMHLFSTRTSSGILYEVDARLRPSGAAGMLVTSADAFADYQQHEAWTWEHQALVRARVVYGDPQLTSQFDAVRRTIMTTARDGKTLQTEVREMREKMRAHLGNKHRDRFDIKADEGGITDIEFIAQYLVLRYAHEKPKLTRWSDNVRILELLAQNGIMDEHEAQALTVAYTTLRDELHHLALQELPGHVAQTCFSKERALVQASWRKWLVAV.

The adenylyl removase stretch occupies residues 1–440 (MTPLSSPLSQ…VFNELIGDDE (440 aa)). Positions 450-947 (SEPWREVWQD…ASWRKWLVAV (498 aa)) are adenylyl transferase.

The protein belongs to the GlnE family. The cofactor is Mg(2+).

It catalyses the reaction [glutamine synthetase]-O(4)-(5'-adenylyl)-L-tyrosine + phosphate = [glutamine synthetase]-L-tyrosine + ADP. The enzyme catalyses [glutamine synthetase]-L-tyrosine + ATP = [glutamine synthetase]-O(4)-(5'-adenylyl)-L-tyrosine + diphosphate. Its function is as follows. Involved in the regulation of glutamine synthetase GlnA, a key enzyme in the process to assimilate ammonia. When cellular nitrogen levels are high, the C-terminal adenylyl transferase (AT) inactivates GlnA by covalent transfer of an adenylyl group from ATP to specific tyrosine residue of GlnA, thus reducing its activity. Conversely, when nitrogen levels are low, the N-terminal adenylyl removase (AR) activates GlnA by removing the adenylyl group by phosphorolysis, increasing its activity. The regulatory region of GlnE binds the signal transduction protein PII (GlnB) which indicates the nitrogen status of the cell. The protein is Bifunctional glutamine synthetase adenylyltransferase/adenylyl-removing enzyme of Salmonella schwarzengrund (strain CVM19633).